A 344-amino-acid polypeptide reads, in one-letter code: uncharacterized protein (344 aa).

NADP(+) contacts are provided by Lys-38 and Tyr-167.

The protein belongs to the NAD(P)-dependent epimerase/dehydratase family. Dihydroflavonol-4-reductase subfamily.

This is an uncharacterized protein from Saccharomyces cerevisiae (strain ATCC 204508 / S288c) (Baker's yeast).